The chain runs to 88 residues: ATP synthase F(0) complex subunit f, mitochondrial (88 aa).

A2 carries the post-translational modification N-acetylalanine. Phosphoserine is present on S3. An N6-acetyllysine modification is found at K16. A helical transmembrane segment spans residues 62-79 (MVLAAYVFLNYCRSYKEL).

In terms of assembly, component of the ATP synthase complex composed at least of ATP5F1A/subunit alpha, ATP5F1B/subunit beta, ATP5MC1/subunit c (homooctomer), MT-ATP6/subunit a, MT-ATP8/subunit 8, ATP5ME/subunit e, ATP5MF/subunit f, ATP5MG/subunit g, ATP5MK/subunit k, ATP5MJ/subunit j, ATP5F1C/subunit gamma, ATP5F1D/subunit delta, ATP5F1E/subunit epsilon, ATP5PF/subunit F6, ATP5PB/subunit b, ATP5PD/subunit d, ATP5PO/subunit OSCP. ATP synthase complex consists of a soluble F(1) head domain (subunits alpha(3) and beta(3)) - the catalytic core - and a membrane F(0) domain - the membrane proton channel (subunits c, a, 8, e, f, g, k and j). These two domains are linked by a central stalk (subunits gamma, delta, and epsilon) rotating inside the F1 region and a stationary peripheral stalk (subunits F6, b, d, and OSCP).

Its subcellular location is the mitochondrion. It is found in the mitochondrion inner membrane. In terms of biological role, subunit f, of the mitochondrial membrane ATP synthase complex (F(1)F(0) ATP synthase or Complex V) that produces ATP from ADP in the presence of a proton gradient across the membrane which is generated by electron transport complexes of the respiratory chain. ATP synthase complex consist of a soluble F(1) head domain - the catalytic core - and a membrane F(1) domain - the membrane proton channel. These two domains are linked by a central stalk rotating inside the F(1) region and a stationary peripheral stalk. During catalysis, ATP synthesis in the catalytic domain of F(1) is coupled via a rotary mechanism of the central stalk subunits to proton translocation. In vivo, can only synthesize ATP although its ATP hydrolase activity can be activated artificially in vitro. Part of the complex F(0) domain. The chain is ATP synthase F(0) complex subunit f, mitochondrial from Bos taurus (Bovine).